Consider the following 313-residue polypeptide: Olfactory receptor 1G1 (313 aa).

The Extracellular segment spans residues 1-25 (MEGKNLTSISEFFLLGFSEQLEEQK). Asn5 carries an N-linked (GlcNAc...) asparagine glycan. Residues 26–49 (ALFGSFLFMYLVMVAGNLLIILVI) form a helical membrane-spanning segment. Over 50 to 57 (ITDTQLHT) the chain is Cytoplasmic. The chain crosses the membrane as a helical span at residues 58–79 (PMYFFLANLSLADACFVSTTVP). The Extracellular segment spans residues 80-100 (KMLANIQIQSQAISYSGCLLQ). Cys97 and Cys189 are joined by a disulfide. The helical transmembrane segment at 101–120 (LYFFMLFVMLEAFLLAVMAY) threads the bilayer. At 121-140 (DHYVAICHPLHYILIMSPGL) the chain is on the cytoplasmic side. A helical membrane pass occupies residues 141 to 158 (CVFLVSASWIMNALYSLL). The Extracellular portion of the chain corresponds to 159 to 196 (HTLLMNSLSFCANHEIPHFFCDIDPLLSLSCADPFTNE). The helical transmembrane segment at 197 to 219 (LVIFITGGLTGLICVLCLIISYT) threads the bilayer. At 220-236 (NVFSTILKIPSAQGKRK) the chain is on the cytoplasmic side. A helical membrane pass occupies residues 237-259 (AFSTCSSHLSVVSLFXGTSFCVY). At 260–272 (FSPPSTRXAQKDT) the chain is on the extracellular side. A helical transmembrane segment spans residues 273 to 292 (VASVMYTVVTPMLNPFIYSL). At 293-313 (RNQEIKSSLRKLIWVRKIHSP) the chain is on the cytoplasmic side.

It belongs to the G-protein coupled receptor 1 family.

Its subcellular location is the cell membrane. Functionally, odorant receptor. In Pan troglodytes (Chimpanzee), this protein is Olfactory receptor 1G1 (OR1G1).